The sequence spans 616 residues: Dihydroxy-acid dehydratase (616 aa).

D81 lines the Mg(2+) pocket. Position 122 (C122) interacts with [2Fe-2S] cluster. Residues D123 and K124 each contribute to the Mg(2+) site. At K124 the chain carries N6-carboxylysine. [2Fe-2S] cluster is bound at residue C195. Position 491 (E491) interacts with Mg(2+). S517 serves as the catalytic Proton acceptor.

This sequence belongs to the IlvD/Edd family. Homodimer. [2Fe-2S] cluster serves as cofactor. It depends on Mg(2+) as a cofactor.

It catalyses the reaction (2R)-2,3-dihydroxy-3-methylbutanoate = 3-methyl-2-oxobutanoate + H2O. The enzyme catalyses (2R,3R)-2,3-dihydroxy-3-methylpentanoate = (S)-3-methyl-2-oxopentanoate + H2O. It participates in amino-acid biosynthesis; L-isoleucine biosynthesis; L-isoleucine from 2-oxobutanoate: step 3/4. It functions in the pathway amino-acid biosynthesis; L-valine biosynthesis; L-valine from pyruvate: step 3/4. Functionally, functions in the biosynthesis of branched-chain amino acids. Catalyzes the dehydration of (2R,3R)-2,3-dihydroxy-3-methylpentanoate (2,3-dihydroxy-3-methylvalerate) into 2-oxo-3-methylpentanoate (2-oxo-3-methylvalerate) and of (2R)-2,3-dihydroxy-3-methylbutanoate (2,3-dihydroxyisovalerate) into 2-oxo-3-methylbutanoate (2-oxoisovalerate), the penultimate precursor to L-isoleucine and L-valine, respectively. The chain is Dihydroxy-acid dehydratase from Tolumonas auensis (strain DSM 9187 / NBRC 110442 / TA 4).